Consider the following 173-residue polypeptide: Adenine phosphoribosyltransferase (173 aa).

It belongs to the purine/pyrimidine phosphoribosyltransferase family. In terms of assembly, homodimer.

The protein resides in the cytoplasm. The catalysed reaction is AMP + diphosphate = 5-phospho-alpha-D-ribose 1-diphosphate + adenine. It participates in purine metabolism; AMP biosynthesis via salvage pathway; AMP from adenine: step 1/1. Catalyzes a salvage reaction resulting in the formation of AMP, that is energically less costly than de novo synthesis. This is Adenine phosphoribosyltransferase from Listeria monocytogenes serotype 4b (strain CLIP80459).